We begin with the raw amino-acid sequence, 524 residues long: Peptide chain release factor 3 (524 aa).

Residues 10–278 form the tr-type G domain; the sequence is DSRRTFAIIS…TFLQFAPAPH (269 aa). GTP-binding positions include 19–26, 87–91, and 141–144; these read SHPDAGKT, DTPGH, and NKLD.

Belongs to the TRAFAC class translation factor GTPase superfamily. Classic translation factor GTPase family. PrfC subfamily.

Its subcellular location is the cytoplasm. Functionally, increases the formation of ribosomal termination complexes and stimulates activities of RF-1 and RF-2. It binds guanine nucleotides and has strong preference for UGA stop codons. It may interact directly with the ribosome. The stimulation of RF-1 and RF-2 is significantly reduced by GTP and GDP, but not by GMP. The sequence is that of Peptide chain release factor 3 from Enterococcus faecalis (strain ATCC 700802 / V583).